The chain runs to 190 residues: UPF0200 protein OE_4442F (190 aa).

8–15 is an ATP binding site; sequence GMPGSGKS. The disordered stretch occupies residues 120 to 144; the sequence is ARIEDRDRPGDTDGEPLDAREDRER.

Belongs to the UPF0200 family.

The polypeptide is UPF0200 protein OE_4442F (Halobacterium salinarum (strain ATCC 29341 / DSM 671 / R1)).